A 389-amino-acid polypeptide reads, in one-letter code: Lipopolysaccharide assembly protein B (389 aa).

The chain crosses the membrane as a helical span at residues 1-20 (MLELLFLLLPVAAAYGWYMG). At 21-389 (RRSAQQNKQD…IKPIRGLDGL (369 aa)) the chain is on the cytoplasmic side. 7 TPR repeats span residues 35 to 68 (LSRD…DTGT), 69 to 102 (VEAH…ASLT), 107 to 140 (LLAI…TDFR), 142 to 174 (GALQ…GKDK), 180 to 213 (AHFY…DKNS), 214 to 247 (ARVS…DREL), and 249 to 282 (SETL…NTGA). Fe cation is bound by residues C357, C360, C371, and C374.

This sequence belongs to the LapB family.

It is found in the cell inner membrane. Functionally, modulates cellular lipopolysaccharide (LPS) levels by regulating LpxC, which is involved in lipid A biosynthesis. May act by modulating the proteolytic activity of FtsH towards LpxC. May also coordinate assembly of proteins involved in LPS synthesis at the plasma membrane. This is Lipopolysaccharide assembly protein B from Escherichia coli O157:H7.